The chain runs to 399 residues: Acetate kinase 2 (399 aa).

Asparagine 10 serves as a coordination point for Mg(2+). Lysine 17 serves as a coordination point for ATP. Arginine 89 is a substrate binding site. Aspartate 146 (proton donor/acceptor) is an active-site residue. ATP contacts are provided by residues 206 to 210 (HLGNG), 281 to 283 (DCR), and 329 to 333 (GIGEN). Residue glutamate 384 participates in Mg(2+) binding.

This sequence belongs to the acetokinase family. In terms of assembly, homodimer. It depends on Mg(2+) as a cofactor. Requires Mn(2+) as cofactor.

Its subcellular location is the cytoplasm. The enzyme catalyses acetate + ATP = acetyl phosphate + ADP. It functions in the pathway metabolic intermediate biosynthesis; acetyl-CoA biosynthesis; acetyl-CoA from acetate: step 1/2. Catalyzes the formation of acetyl phosphate from acetate and ATP. Can also catalyze the reverse reaction. The chain is Acetate kinase 2 from Neisseria meningitidis serogroup A / serotype 4A (strain DSM 15465 / Z2491).